A 378-amino-acid polypeptide reads, in one-letter code: Acetylornithine deacetylase (378 aa).

A Zn(2+)-binding site is contributed by histidine 76. Residue aspartate 78 is part of the active site. A Zn(2+)-binding site is contributed by aspartate 108. Glutamate 140 is a catalytic residue. Glutamate 141, glutamate 165, and histidine 351 together coordinate Zn(2+).

The protein belongs to the peptidase M20A family. ArgE subfamily. In terms of assembly, homodimer. Zn(2+) is required as a cofactor. It depends on Co(2+) as a cofactor. The cofactor is glutathione.

It localises to the cytoplasm. The catalysed reaction is N(2)-acetyl-L-ornithine + H2O = L-ornithine + acetate. Its pathway is amino-acid biosynthesis; L-arginine biosynthesis; L-ornithine from N(2)-acetyl-L-ornithine (linear): step 1/1. Catalyzes the hydrolysis of the amide bond of N(2)-acetylated L-amino acids. Cleaves the acetyl group from N-acetyl-L-ornithine to form L-ornithine, an intermediate in L-arginine biosynthesis pathway, and a branchpoint in the synthesis of polyamines. The polypeptide is Acetylornithine deacetylase (Vibrio parahaemolyticus serotype O3:K6 (strain RIMD 2210633)).